Consider the following 479-residue polypeptide: Adenosylhomocysteinase (479 aa).

Positions 56, 134, and 200 each coordinate substrate. Position 201-203 (201-203 (TTT)) interacts with NAD(+). Substrate-binding residues include lysine 230 and aspartate 234. Residues asparagine 235, 264–269 (GYGDVG), glutamate 287, asparagine 322, 343–345 (IGH), and asparagine 391 contribute to the NAD(+) site.

It belongs to the adenosylhomocysteinase family. In terms of assembly, homotetramer. NAD(+) is required as a cofactor.

The enzyme catalyses S-adenosyl-L-homocysteine + H2O = L-homocysteine + adenosine. It functions in the pathway amino-acid biosynthesis; L-homocysteine biosynthesis; L-homocysteine from S-adenosyl-L-homocysteine: step 1/1. Its function is as follows. Adenosylhomocysteine is a competitive inhibitor of S-adenosyl-L-methionine-dependent methyl transferase reactions; therefore adenosylhomocysteinase may play a key role in the control of methylations via regulation of the intracellular concentration of adenosylhomocysteine. The sequence is that of Adenosylhomocysteinase from Plasmodium falciparum (isolate 3D7).